Reading from the N-terminus, the 442-residue chain is tRNA modification GTPase MnmE (442 aa).

Arg-27, Glu-84, and Lys-124 together coordinate (6S)-5-formyl-5,6,7,8-tetrahydrofolate. Residues 221 to 366 (GLHVVIVGAP…LLDALQAFAE (146 aa)) enclose the TrmE-type G domain. GTP-binding positions include 231 to 236 (NAGKSS), 250 to 256 (SKEAGTT), and 275 to 278 (DTAG). Residues Ser-235 and Thr-256 each coordinate Mg(2+). Lys-442 contacts (6S)-5-formyl-5,6,7,8-tetrahydrofolate.

It belongs to the TRAFAC class TrmE-Era-EngA-EngB-Septin-like GTPase superfamily. TrmE GTPase family. In terms of assembly, homodimer. Heterotetramer of two MnmE and two MnmG subunits. Requires K(+) as cofactor.

It is found in the cytoplasm. In terms of biological role, exhibits a very high intrinsic GTPase hydrolysis rate. Involved in the addition of a carboxymethylaminomethyl (cmnm) group at the wobble position (U34) of certain tRNAs, forming tRNA-cmnm(5)s(2)U34. This Brucella canis (strain ATCC 23365 / NCTC 10854 / RM-666) protein is tRNA modification GTPase MnmE.